Reading from the N-terminus, the 1340-residue chain is Lysine-specific demethylase ELF6 (1340 aa).

The JmjN domain occupies 16–57 (APVFRPTDTEFADPIAYISKIEKEASAFGICKIIPPLPKPSK). Residues 195 to 245 (QRKRRGRGFYQRKTENNDPSGKNGEKSSPEVEKAPLASTSLSSQDSSKQKN) form a disordered region. A compositionally biased stretch (basic and acidic residues) spans 217–227 (NGEKSSPEVEK). One can recognise a JmjC domain in the interval 262–428 (NSSWNLQMIA…VAKEAAVRRA (167 aa)). 3 residues coordinate Fe cation: H305, E307, and H396. Residues 818–825 (GKKEEKII) carry the Nuclear localization signal 1 motif. The segment at 1092-1225 (GEPLESSDIL…SRQQEVPTTT (134 aa)) is disordered. Positions 1099–1115 (DILSSSNGDEASSNGLQ) are enriched in polar residues. Residues 1124–1133 (ESEVSSSENT) show a composition bias toward low complexity. Positions 1188 to 1201 (SLKHTETSDEEKKP) are enriched in basic and acidic residues. A compositionally biased stretch (polar residues) spans 1215–1225 (GSRQQEVPTTT). C2H2-type zinc fingers lie at residues 1228–1250 (NRCYLEGCKMTFESKAKLQTHKR), 1251–1275 (NRCTHEGCGKKFRAHKYLVLHQRVH), 1281–1305 (FECSWKGCSMTFKWQWARTEHLRLH), and 1311–1337 (YICKVDGCGLSFRFVSDYSRHRRKTMH). Residues C1230, C1235, H1248, C1253, C1258, H1265, H1271, H1275, C1283, C1288, H1301, H1305, C1313, C1318, H1331, and H1337 each contribute to the Zn(2+) site. The short motif at 1248-1255 (HKRNRCTH) is the Nuclear localization signal 2 element. Residues 1260–1333 (KKFRAHKYLV…FVSDYSRHRR (74 aa)) are DNA-binding.

Belongs to the JHDM3 histone demethylase family. As to quaternary structure, interacts with BZR2 (via N-terminus). Expressed at low levels in seedlings, cotyledons and leaves. Detected in inflorescences, stems, roots and siliques but not in shoot apical meristems or root tips. Accumulates in flowers and embryos.

The protein localises to the nucleus. The enzyme catalyses N(6),N(6),N(6)-trimethyl-L-lysyl(27)-[histone H3] + 2-oxoglutarate + O2 = N(6),N(6)-dimethyl-L-lysyl(27)-[histone H3] + formaldehyde + succinate + CO2. It catalyses the reaction N(6),N(6)-dimethyl-L-lysyl(27)-[histone H3] + 2-oxoglutarate + O2 = N(6)-methyl-L-lysyl(27)-[histone H3] + formaldehyde + succinate + CO2. Its function is as follows. Histone demethylase that demethylates 'Lys-27' (H3K27me) of histone H3, thus acting as a positive regulator of gene expression. Demethylates tri-methylated (H3K27me3) and di-methylated (H3K27me2) H3K27me. Inactive on H3K27me1, H3K4me3, H3K9me2 and H3K36me3. Acts as a repressor of the photoperiodic flowering pathway and of FT. May also be active on H3K4me. Binds around the transcription start site of the FT locus. Required for epigenetic reprogramming by resetting the expression of the floral repressor FLC locus, thus aluviating cold-mediated FLC epigenetically silencing occurring during vernalization and preventing inapropriate epigenetic states inheritence. In terms of biological role, together with REF6, required for H3K27me3 resetting (especially in constitutive heterochromatin within the pericentromeric regions) and transgenerational inheritance of histone marks, thus acting in safeguarding genome and epigenome integrity during sexual reproduction. This chain is Lysine-specific demethylase ELF6, found in Arabidopsis thaliana (Mouse-ear cress).